A 306-amino-acid polypeptide reads, in one-letter code: Ornithine carbamoyltransferase (306 aa).

Carbamoyl phosphate-binding positions include 46 to 49 (STRT), glutamine 73, arginine 97, and 124 to 127 (HPTQ). L-ornithine-binding positions include asparagine 156, aspartate 220, and 224–225 (SM). Residues 260–261 (CL) and arginine 288 contribute to the carbamoyl phosphate site.

Belongs to the aspartate/ornithine carbamoyltransferase superfamily. OTCase family.

The protein resides in the cytoplasm. The enzyme catalyses carbamoyl phosphate + L-ornithine = L-citrulline + phosphate + H(+). It participates in amino-acid biosynthesis; L-arginine biosynthesis; L-arginine from L-ornithine and carbamoyl phosphate: step 1/3. In terms of biological role, reversibly catalyzes the transfer of the carbamoyl group from carbamoyl phosphate (CP) to the N(epsilon) atom of ornithine (ORN) to produce L-citrulline. This Campylobacter jejuni subsp. jejuni serotype O:23/36 (strain 81-176) protein is Ornithine carbamoyltransferase.